The following is a 492-amino-acid chain: Glycerol kinase (492 aa).

Residue threonine 11 participates in ADP binding. ATP-binding residues include threonine 11 and threonine 12. Threonine 11 is a sn-glycerol 3-phosphate binding site. An ADP-binding site is contributed by lysine 15. 4 residues coordinate sn-glycerol 3-phosphate: arginine 79, glutamate 80, tyrosine 129, and aspartate 238. Residues arginine 79, glutamate 80, tyrosine 129, aspartate 238, and glutamine 239 each coordinate glycerol. Residues threonine 260, glycine 302, glycine 403, and asparagine 407 each coordinate ADP. Residues threonine 260, glycine 302, and glycine 403 each contribute to the ATP site.

The protein belongs to the FGGY kinase family.

The enzyme catalyses glycerol + ATP = sn-glycerol 3-phosphate + ADP + H(+). The protein operates within polyol metabolism; glycerol degradation via glycerol kinase pathway; sn-glycerol 3-phosphate from glycerol: step 1/1. Inhibited by fructose 1,6-bisphosphate (FBP). Functionally, key enzyme in the regulation of glycerol uptake and metabolism. Catalyzes the phosphorylation of glycerol to yield sn-glycerol 3-phosphate. In Aquifex aeolicus (strain VF5), this protein is Glycerol kinase.